The primary structure comprises 224 residues: Histone H1.03 (224 aa).

2 stretches are compositionally biased toward low complexity: residues Met1 to Ala22 and Ala30 to Pro42. Disordered stretches follow at residues Met1–Ser43 and Gln99–Lys224. The H15 domain maps to Ala40 to Lys113. 4 stretches are compositionally biased toward basic residues: residues Ala122–Ala137, Lys145–Lys162, Lys170–Val188, and Lys197–Lys224.

Belongs to the histone H1/H5 family.

The protein resides in the nucleus. It localises to the chromosome. In terms of biological role, histones H1 are necessary for the condensation of nucleosome chains into higher-order structures. In Gallus gallus (Chicken), this protein is Histone H1.03.